Reading from the N-terminus, the 205-residue chain is MGNPEKLMTQIFDLKFTSKSLQRQARKCEKEEKEQKLKVKKAIEKGNMDGARIYAENAIRKRTEHMNYLRLASRLDAVVARLDTQAKMQVIGKSMANIVKSLDSALATGNLQKMSETMDNFERQFVNMEVQAEFMEGAMAGSTSLSTPETEVNSLMQQVADDYGLEVSVGLPQAAAHAIPAAKEKEKAVDEDDLSRRLAELKARG.

Coiled coils occupy residues 13-51 (DLKFTSKSLQRQARKCEKEEKEQKLKVKKAIEKGNMDGA) and 109-140 (GNLQKMSETMDNFERQFVNMEVQAEFMEGAMA).

The protein belongs to the SNF7 family.

Its subcellular location is the cytoplasm. It localises to the endosome membrane. Its function is as follows. Involved in ESCRT-dependent multivesicular body (MVB) formation and sorting of endosomal cargo proteins into MVBs. The chain is ESCRT-related protein CHMP1 from Oryza sativa subsp. japonica (Rice).